The following is a 187-amino-acid chain: Elongation factor P (187 aa).

The protein belongs to the elongation factor P family.

The protein resides in the cytoplasm. Its pathway is protein biosynthesis; polypeptide chain elongation. Involved in peptide bond synthesis. Stimulates efficient translation and peptide-bond synthesis on native or reconstituted 70S ribosomes in vitro. Probably functions indirectly by altering the affinity of the ribosome for aminoacyl-tRNA, thus increasing their reactivity as acceptors for peptidyl transferase. This chain is Elongation factor P, found in Desulfatibacillum aliphaticivorans.